The primary structure comprises 387 residues: uncharacterized protein (387 aa).

A helical membrane pass occupies residues 5–25 (FVLFSFPFLLLSSMLIFYQTT).

Belongs to the LicD transferase family.

It localises to the membrane. This is an uncharacterized protein from Caenorhabditis elegans.